Reading from the N-terminus, the 467-residue chain is Protein arginine methyltransferase NDUFAF7 homolog, mitochondrial (467 aa).

It belongs to the NDUFAF7 family.

Its subcellular location is the mitochondrion. It carries out the reaction L-arginyl-[protein] + 2 S-adenosyl-L-methionine = N(omega),N(omega)'-dimethyl-L-arginyl-[protein] + 2 S-adenosyl-L-homocysteine + 2 H(+). In terms of biological role, arginine methyltransferase involved in the assembly or stability of mitochondrial NADH:ubiquinone oxidoreductase complex (complex I). The polypeptide is Protein arginine methyltransferase NDUFAF7 homolog, mitochondrial (Schizosaccharomyces pombe (strain 972 / ATCC 24843) (Fission yeast)).